Consider the following 329-residue polypeptide: GTPase Obg (329 aa).

The region spanning 1 to 159 (MQFIDQARIT…WLLHLELKLL (159 aa)) is the Obg domain. An OBG-type G domain is found at 160-328 (AEVGIIGLPN…LLNKIWSKLE (169 aa)). ATP contacts are provided by residues 166 to 173 (GLPNAGKS), 191 to 195 (FTTLI), 213 to 216 (DIPG), 280 to 283 (NKKE), and 309 to 311 (SAI). Mg(2+)-binding residues include serine 173 and threonine 193.

This sequence belongs to the TRAFAC class OBG-HflX-like GTPase superfamily. OBG GTPase family. Monomer. Mg(2+) serves as cofactor.

The protein resides in the cytoplasm. An essential GTPase which binds GTP, GDP and possibly (p)ppGpp with moderate affinity, with high nucleotide exchange rates and a fairly low GTP hydrolysis rate. Plays a role in control of the cell cycle, stress response, ribosome biogenesis and in those bacteria that undergo differentiation, in morphogenesis control. This chain is GTPase Obg, found in Prochlorococcus marinus (strain SARG / CCMP1375 / SS120).